The following is a 366-amino-acid chain: Ribosomal RNA large subunit methyltransferase M (366 aa).

S-adenosyl-L-methionine contacts are provided by residues Ser188, 221–224 (CPGG), Asp240, Asp260, and Asp277. Residue Lys306 is the Proton acceptor of the active site.

The protein belongs to the class I-like SAM-binding methyltransferase superfamily. RNA methyltransferase RlmE family. RlmM subfamily. As to quaternary structure, monomer.

It is found in the cytoplasm. The enzyme catalyses cytidine(2498) in 23S rRNA + S-adenosyl-L-methionine = 2'-O-methylcytidine(2498) in 23S rRNA + S-adenosyl-L-homocysteine + H(+). Catalyzes the 2'-O-methylation at nucleotide C2498 in 23S rRNA. This chain is Ribosomal RNA large subunit methyltransferase M, found in Photorhabdus asymbiotica subsp. asymbiotica (strain ATCC 43949 / 3105-77) (Xenorhabdus luminescens (strain 2)).